Consider the following 320-residue polypeptide: Heterogeneous nuclear ribonucleoprotein A1 (320 aa).

Met-1 carries the N-acetylmethionine modification. N-acetylserine; in Heterogeneous nuclear ribonucleoprotein A1, N-terminally processed is present on Ser-2. At Ser-2 the chain carries Phosphoserine. Lys-3 is modified (N6-acetyllysine; alternate). A Glycyl lysine isopeptide (Lys-Gly) (interchain with G-Cter in SUMO2); alternate cross-link involves residue Lys-3. Residues Ser-4 and Ser-6 each carry the phosphoserine modification. A globular A domain region spans residues 4-94; that stretch reads SESPKEPEQL…EPKRAVSRED (91 aa). A Glycyl lysine isopeptide (Lys-Gly) (interchain with G-Cter in SUMO2) cross-link involves residue Lys-8. RRM domains are found at residues 14–97 and 105–184; these read RKLF…DSQR and KKIF…LSKQ. Ser-22 is modified (phosphoserine). A Glycyl lysine isopeptide (Lys-Gly) (interchain with G-Cter in SUMO2) cross-link involves residue Lys-78. Residues 95 to 185 form a globular B domain region; that stretch reads SQRPGAHLTV…EVRKALSKQE (91 aa). Residue Lys-113 forms a Glycyl lysine isopeptide (Lys-Gly) (interchain with G-Cter in SUMO) linkage. Residues Lys-179 and Lys-183 each participate in a glycyl lysine isopeptide (Lys-Gly) (interchain with G-Cter in SUMO2) cross-link. The disordered stretch occupies residues 182 to 216; that stretch reads SKQEMASASSSQRGRSGSGNFGGGRGGGFGGNDNF. Ser-192 is subject to Phosphoserine; by MKNK2. Asymmetric dimethylarginine; alternate is present on Arg-194. Position 194 is a dimethylated arginine; alternate (Arg-194). Arg-194 is subject to Omega-N-methylarginine; alternate. Residues 197–216 are compositionally biased toward gly residues; sequence SGSGNFGGGRGGGFGGNDNF. A Phosphoserine modification is found at Ser-199. Asymmetric dimethylarginine; alternate occurs at positions 206, 218, 225, and 232. Position 206 is a dimethylated arginine; alternate (Arg-206). Arg-206, Arg-218, Arg-225, and Arg-232 each carry omega-N-methylarginine; alternate. The tract at residues 218-240 is RNA-binding RGG-box; the sequence is RGGNFSGRGGFGGSRGGGGYGGS. Dimethylated arginine; alternate is present on Arg-225. The segment at 268–305 is nuclear targeting sequence; that stretch reads NQSSNFGPMKGGNFGGRSSGPYGGGGQYFAKPRNQGGY. The segment at 274–320 is disordered; sequence GPMKGGNFGGRSSGPYGGGGQYFAKPRNQGGYGGSSSSSSYGSGRRF. The segment covering 276-294 has biased composition (gly residues); it reads MKGGNFGGRSSGPYGGGGQ. The residue at position 284 (Arg-284) is an Omega-N-methylarginine. The residue at position 285 (Ser-285) is a Phosphoserine. At Lys-298 the chain carries N6-acetyllysine; alternate. Lys-298 participates in a covalent cross-link: Glycyl lysine isopeptide (Lys-Gly) (interchain with G-Cter in SUMO2); alternate. Arg-300 carries the post-translational modification Omega-N-methylarginine. Residues 308–320 are compositionally biased toward low complexity; it reads SSSSSSYGSGRRF. Position 309 is a phosphoserine (Ser-309). Phosphoserine; by MKNK2 is present on residues Ser-310, Ser-311, and Ser-312. 2 positions are modified to phosphoserine: Ser-313 and Ser-316. Arg-318 bears the Omega-N-methylarginine mark.

Identified in the spliceosome C complex. Identified in a IGF2BP1-dependent mRNP granule complex containing untranslated mRNAs. Interacts with SEPT6. Interacts with C9orf72. Interacts with KHDRBS1. Interacts with UBQLN2. Interacts with PPIA/CYPA. Post-translationally, sumoylated.

Its subcellular location is the nucleus. It localises to the cytoplasm. Functionally, involved in the packaging of pre-mRNA into hnRNP particles, transport of poly(A) mRNA from the nucleus to the cytoplasm and modulation of splice site selection. Plays a role in the splicing of pyruvate kinase PKM by binding repressively to sequences flanking PKM exon 9, inhibiting exon 9 inclusion and resulting in exon 10 inclusion and production of the PKM M2 isoform. Binds to the IRES and thereby inhibits the translation of the apoptosis protease activating factor APAF1. May bind to specific miRNA hairpins. The polypeptide is Heterogeneous nuclear ribonucleoprotein A1 (Hnrnpa1) (Mus musculus (Mouse)).